The chain runs to 863 residues: MQYPFQEVESFWQKFWEEHKSFQTNIRSSKPKFYCLDMFPYPSGAGLHVGHPEGYTATDILSRFKRMKGFEVLHPMGWDAFGLPAERYAMQTGIHPAITTKDNIDNFRRQIQMIGLSYDWSRELSTTDPDYYKFTQWIFIQLYQSWFNPELKKAESINELIRRFSNQGSNGLDYRQFNSEEWKNFSPVEKEKILSDFRLVYQAEIPVNWCEALGTVLANEEVEEWVGKGYEVVRKPMRQYMMRITAYADRLLEDLELVEWPPSTLEMQKNWIGKSEGLEITFPFLKPLQSGLEGIRIFTTRPDTIFGVTYMVVAPEHPIVSEITTPEQKQKVEEYQKTSSLKSDLDRMELNKEKTGVFTGTFVFNPADPSQKIPVWISDYVLYGYGTGAIMAVPAHDQRDFEFARTFGLKIIPVIEGEISEAAFDSKTSTCINSSSSEISINGLDYTSASSKIISWAESKKIGRKKIQFKLRDWLFARQRYWGEPIPLVHYPSGVTKPIPESELPLVLPNLEEFKPSGTGESPLALAKDWLQYKDPSTGEIGTRETNTMPQWAGSCWYYLRYIDPKNGRFLCDPELEKKWMPVNLYVGGSEHAVLHLLYSRFWHKFLFDIGAVSTKEPFDKLIHQGLILGEDKRKMSKSLGNVVNPDDVIKEYGADSLRLFEMFMGPLEMVKPWSTRGVEGVFRFLNRIWRLFHSGSQESFRLDDVEPTPEELKILHKTIQKVNEDIPNFSFNTAIAQLMIFVNEFTPSDRRPKKVLESFILLLAPFAPHIAEELWKRSGKMESLSYEKFPEADPQYLIESEILIVVQVNGKLRDEFKAPKDVSQSDAISMAKNLDKIKGILEGKTIRKEIYVPGKLVNLVIG.

Residues 40-51 carry the 'HIGH' region motif; sequence PYPSGAGLHVGH. Residues 635–639 carry the 'KMSKS' region motif; sequence KMSKS. Lysine 638 serves as a coordination point for ATP.

Belongs to the class-I aminoacyl-tRNA synthetase family.

Its subcellular location is the cytoplasm. It catalyses the reaction tRNA(Leu) + L-leucine + ATP = L-leucyl-tRNA(Leu) + AMP + diphosphate. The polypeptide is Leucine--tRNA ligase (Leptospira interrogans serogroup Icterohaemorrhagiae serovar Lai (strain 56601)).